We begin with the raw amino-acid sequence, 247 residues long: 5'-nucleotidase SurE (247 aa).

A divalent metal cation contacts are provided by Asp8, Asp9, Ser39, and Asn91.

The protein belongs to the SurE nucleotidase family. Requires a divalent metal cation as cofactor.

The protein localises to the cytoplasm. The catalysed reaction is a ribonucleoside 5'-phosphate + H2O = a ribonucleoside + phosphate. In terms of biological role, nucleotidase that shows phosphatase activity on nucleoside 5'-monophosphates. This is 5'-nucleotidase SurE from Nitrosomonas europaea (strain ATCC 19718 / CIP 103999 / KCTC 2705 / NBRC 14298).